Reading from the N-terminus, the 91-residue chain is ATP-dependent Clp protease adapter protein ClpS (91 aa).

It belongs to the ClpS family. As to quaternary structure, binds to the N-terminal domain of the chaperone ClpA.

Functionally, involved in the modulation of the specificity of the ClpAP-mediated ATP-dependent protein degradation. The chain is ATP-dependent Clp protease adapter protein ClpS from Synechococcus sp. (strain ATCC 27144 / PCC 6301 / SAUG 1402/1) (Anacystis nidulans).